Here is a 405-residue protein sequence, read N- to C-terminus: 8-amino-7-oxononanoate synthase 1 (405 aa).

A substrate-binding site is contributed by R29. Residue 116-117 coordinates pyridoxal 5'-phosphate; the sequence is GY. Position 141 (H141) interacts with substrate. Residues S187, H215, and T247 each contribute to the pyridoxal 5'-phosphate site. Position 250 is an N6-(pyridoxal phosphate)lysine (K250). T368 serves as a coordination point for substrate.

The protein belongs to the class-II pyridoxal-phosphate-dependent aminotransferase family. BioF subfamily. Homodimer. The cofactor is pyridoxal 5'-phosphate.

It carries out the reaction 6-carboxyhexanoyl-[ACP] + L-alanine + H(+) = (8S)-8-amino-7-oxononanoate + holo-[ACP] + CO2. Its pathway is cofactor biosynthesis; biotin biosynthesis. Functionally, catalyzes the decarboxylative condensation of pimeloyl-[acyl-carrier protein] and L-alanine to produce 8-amino-7-oxononanoate (AON), [acyl-carrier protein], and carbon dioxide. In Polaromonas sp. (strain JS666 / ATCC BAA-500), this protein is 8-amino-7-oxononanoate synthase 1.